We begin with the raw amino-acid sequence, 682 residues long: Potassium-transporting ATPase ATP-binding subunit (682 aa).

The next 4 helical transmembrane spans lie at 34–54 (PVMF…LAMV), 58–78 (IAGS…TVLF), 219–239 (IALT…TATL), and 254–274 (VLVA…LSAI). D307 functions as the 4-aspartylphosphate intermediate in the catalytic mechanism. ATP is bound by residues D344, E348, 377 to 384 (FTAQSRMS), and K395. Mg(2+)-binding residues include D518 and D522. Transmembrane regions (helical) follow at residues 588-608 (FAII…LNVM), 616-636 (AILS…PLAL), and 662-682 (LVVP…LGLA).

Belongs to the cation transport ATPase (P-type) (TC 3.A.3) family. Type IA subfamily. In terms of assembly, the system is composed of three essential subunits: KdpA, KdpB and KdpC.

The protein localises to the cell inner membrane. It catalyses the reaction K(+)(out) + ATP + H2O = K(+)(in) + ADP + phosphate + H(+). Part of the high-affinity ATP-driven potassium transport (or Kdp) system, which catalyzes the hydrolysis of ATP coupled with the electrogenic transport of potassium into the cytoplasm. This subunit is responsible for energy coupling to the transport system and for the release of the potassium ions to the cytoplasm. This Salmonella paratyphi B (strain ATCC BAA-1250 / SPB7) protein is Potassium-transporting ATPase ATP-binding subunit.